We begin with the raw amino-acid sequence, 457 residues long: D-hydantoinase (457 aa).

Residues histidine 57 and histidine 59 each contribute to the Zn(2+) site. Serine 69 carries the phosphoserine modification. Lysine 148 provides a ligand contact to Zn(2+). Lysine 148 bears the N6-carboxylysine mark. Substrate is bound at residue tyrosine 153. 2 residues coordinate Zn(2+): histidine 181 and histidine 237. Threonine 286 contacts substrate. Residue aspartate 313 coordinates Zn(2+). Asparagine 335 is a substrate binding site.

Belongs to the metallo-dependent hydrolases superfamily. Hydantoinase/dihydropyrimidinase family. As to quaternary structure, homodimer and homotetramer. It depends on Zn(2+) as a cofactor. Post-translationally, carboxylation allows a single lysine to coordinate two zinc ions.

Catalyzes the stereospecific hydrolysis of the cyclic amide bond of D-hydantoin derivatives. The sequence is that of D-hydantoinase (hyuA) from Ralstonia pickettii (Burkholderia pickettii).